Reading from the N-terminus, the 399-residue chain is Elongation factor Tu (399 aa).

The tr-type G domain maps to 10–209 (KPHVNIGTIG…AVDEYIPTPE (200 aa)). Residues 19 to 26 (GHVDHGKT) are G1. A GTP-binding site is contributed by 19-26 (GHVDHGKT). Threonine 26 lines the Mg(2+) pocket. Residues 60 to 64 (GITIN) are G2. The tract at residues 81 to 84 (DCPG) is G3. Residues 81 to 85 (DCPGH) and 136 to 139 (NKMD) each bind GTP. The G4 stretch occupies residues 136 to 139 (NKMD). The segment at 174 to 176 (SAL) is G5.

Belongs to the TRAFAC class translation factor GTPase superfamily. Classic translation factor GTPase family. EF-Tu/EF-1A subfamily. Monomer.

It localises to the cytoplasm. It catalyses the reaction GTP + H2O = GDP + phosphate + H(+). Its function is as follows. GTP hydrolase that promotes the GTP-dependent binding of aminoacyl-tRNA to the A-site of ribosomes during protein biosynthesis. This chain is Elongation factor Tu, found in Nautilia profundicola (strain ATCC BAA-1463 / DSM 18972 / AmH).